A 164-amino-acid polypeptide reads, in one-letter code: Phosphopantetheine adenylyltransferase (164 aa).

S11 is a binding site for substrate. ATP is bound by residues S11 to F12 and H19. 3 residues coordinate substrate: K43, L75, and R89. Residues G90–R92, E100, and Y125–S131 each bind ATP.

This sequence belongs to the bacterial CoaD family. Homohexamer. Mg(2+) is required as a cofactor.

Its subcellular location is the cytoplasm. The enzyme catalyses (R)-4'-phosphopantetheine + ATP + H(+) = 3'-dephospho-CoA + diphosphate. It functions in the pathway cofactor biosynthesis; coenzyme A biosynthesis; CoA from (R)-pantothenate: step 4/5. Functionally, reversibly transfers an adenylyl group from ATP to 4'-phosphopantetheine, yielding dephospho-CoA (dPCoA) and pyrophosphate. The sequence is that of Phosphopantetheine adenylyltransferase from Geobacter sulfurreducens (strain ATCC 51573 / DSM 12127 / PCA).